The primary structure comprises 92 residues: Phospholemman (92 aa).

A signal peptide spans 1–20 (MASPGHILIVCVCLLSMASA). The Extracellular segment spans residues 21 to 35 (EAPQEPDPFTYDYHT). A helical membrane pass occupies residues 36 to 56 (LRIGGLTIAGILFILGILIIL). The Cytoplasmic segment spans residues 57–92 (SKRCRCKFNQQQRTGEPDEEEGTFRSSIRRLSTRRR). Residue C60 is the site of S-palmitoyl cysteine attachment. C62 carries the post-translational modification S-glutathionyl cysteine; alternate. C62 carries S-palmitoyl cysteine; alternate lipidation. Residues 66-92 (QQQRTGEPDEEEGTFRSSIRRLSTRRR) form a disordered region. A Phosphothreonine modification is found at T79. S82 bears the Phosphoserine mark. S83 is modified (phosphoserine; by PKA and PKC). Over residues 83–92 (SIRRLSTRRR) the composition is skewed to basic residues. Residue S88 is modified to Phosphoserine; by PKA. T89 bears the Phosphothreonine; by PKC mark.

The protein belongs to the FXYD family. In terms of assembly, homotetramer. Monomer. Regulatory subunit of the sodium/potassium-transporting ATPase (NKA) which is composed of a catalytic alpha subunit, a non-catalytic beta subunit and an additional regulatory subunit. The monomeric form associates with NKA while the oligomeric form does not. Interacts with the catalytic alpha-1 subunit ATP1A1. Also interacts with the catalytic alpha-2 and alpha-3 subunits ATP1A2 and ATP1A3. Very little interaction with ATP1A1, ATP1A2 or ATP1A3 when phosphorylated at Ser-83. Interacts with the non-catalytic beta-1 subunit ATP1B1. Oxidative stress decreases interaction with ATP1A1 but increases interaction with ATP1B1. Major plasma membrane substrate for cAMP-dependent protein kinase (PKA) and protein kinase C (PKC) in several different tissues. Phosphorylated in response to insulin and adrenergic stimulation. Phosphorylation at Ser-88 stimulates sodium/potassium-transporting ATPase activity while the unphosphorylated form inhibits sodium/potassium-transporting ATPase activity. Phosphorylation increases tetramerization, decreases binding to ATP1A1 and reduces inhibition of ATP1A1 activity. Phosphorylation at Ser-83 leads to greatly reduced interaction with ATP1A1, ATP1A2 and ATP1A3. May be phosphorylated by DMPK. Post-translationally, palmitoylation increases half-life and stability and is enhanced upon phosphorylation at Ser-88 by PKA. In adult brain, highest levels are found in the cerebellum and in the lateral, third and fourth ventricles of the choroid plexus (at protein level). Also detected in cells of a portion of the ependymal lining of the lateral ventricle on its rostral surface posterior to the caudate putamen (at protein level). Expressed in a subset of neurons which secrete gonadotropin-releasing hormone.

It localises to the cell membrane. It is found in the sarcolemma. The protein resides in the apical cell membrane. Its subcellular location is the membrane. The protein localises to the caveola. It localises to the T-tubule. In terms of biological role, associates with and regulates the activity of the sodium/potassium-transporting ATPase (NKA) which transports Na(+) out of the cell and K(+) into the cell. Inhibits NKA activity in its unphosphorylated state and stimulates activity when phosphorylated. Reduces glutathionylation of the NKA beta-1 subunit ATP1B1, thus reversing glutathionylation-mediated inhibition of ATP1B1. Contributes to female sexual development by maintaining the excitability of neurons which secrete gonadotropin-releasing hormone. In Rattus norvegicus (Rat), this protein is Phospholemman.